The following is a 108-amino-acid chain: Holo-[acyl-carrier-protein] synthase (108 aa).

Residues aspartate 9 and glutamate 54 each contribute to the Mg(2+) site.

It belongs to the P-Pant transferase superfamily. AcpS family. Requires Mg(2+) as cofactor.

It is found in the cytoplasm. The enzyme catalyses apo-[ACP] + CoA = holo-[ACP] + adenosine 3',5'-bisphosphate + H(+). In terms of biological role, transfers the 4'-phosphopantetheine moiety from coenzyme A to a Ser of acyl-carrier-protein. In Mycoplasmopsis pulmonis (strain UAB CTIP) (Mycoplasma pulmonis), this protein is Holo-[acyl-carrier-protein] synthase.